The chain runs to 340 residues: DNA-directed RNA polymerase subunit alpha (340 aa).

The interval methionine 1–asparagine 226 is alpha N-terminal domain (alpha-NTD). The tract at residues leucine 243–tyrosine 340 is alpha C-terminal domain (alpha-CTD).

Belongs to the RNA polymerase alpha chain family. Homodimer. The RNAP catalytic core consists of 2 alpha, 1 beta, 1 beta' and 1 omega subunit. When a sigma factor is associated with the core the holoenzyme is formed, which can initiate transcription.

It carries out the reaction RNA(n) + a ribonucleoside 5'-triphosphate = RNA(n+1) + diphosphate. Its function is as follows. DNA-dependent RNA polymerase catalyzes the transcription of DNA into RNA using the four ribonucleoside triphosphates as substrates. The protein is DNA-directed RNA polymerase subunit alpha of Streptomyces avermitilis (strain ATCC 31267 / DSM 46492 / JCM 5070 / NBRC 14893 / NCIMB 12804 / NRRL 8165 / MA-4680).